Here is a 103-residue protein sequence, read N- to C-terminus: Large ribosomal subunit protein uL23 (103 aa).

It belongs to the universal ribosomal protein uL23 family. Part of the 50S ribosomal subunit. Contacts protein L29, and trigger factor when it is bound to the ribosome.

Functionally, one of the early assembly proteins it binds 23S rRNA. One of the proteins that surrounds the polypeptide exit tunnel on the outside of the ribosome. Forms the main docking site for trigger factor binding to the ribosome. The chain is Large ribosomal subunit protein uL23 from Aquifex aeolicus (strain VF5).